The sequence spans 414 residues: 5-aminolevulinate synthase (414 aa).

Substrate is bound by residues arginine 22, serine 133, and lysine 152. Pyridoxal 5'-phosphate contacts are provided by serine 185, histidine 213, and threonine 241. The active site involves lysine 244. Lysine 244 is modified (N6-(pyridoxal phosphate)lysine). Pyridoxal 5'-phosphate contacts are provided by threonine 273 and threonine 274. Position 359 (threonine 359) interacts with substrate.

It belongs to the class-II pyridoxal-phosphate-dependent aminotransferase family. In terms of assembly, homodimer. Pyridoxal 5'-phosphate is required as a cofactor.

It catalyses the reaction succinyl-CoA + glycine + H(+) = 5-aminolevulinate + CO2 + CoA. The protein operates within porphyrin-containing compound metabolism; protoporphyrin-IX biosynthesis; 5-aminolevulinate from glycine: step 1/1. This is 5-aminolevulinate synthase (hemA) from Rickettsia conorii (strain ATCC VR-613 / Malish 7).